Here is a 923-residue protein sequence, read N- to C-terminus: Progesterone receptor (923 aa).

Basic and acidic residues predominate over residues 1-11; that stretch reads MTELQAKDPRT. The segment at 1-49 is disordered; sequence MTELQAKDPRTLHTSGAAPSPTHVGSPLLARLDPDPFQGSQHSDASSVV. The tract at residues 1–164 is AF3; mediates transcriptional activation (in isoform B); that stretch reads MTELQAKDPR…PATKGLLSPL (164 aa). The modulating, Pro-Rich stretch occupies residues 1–556; that stretch reads MTELQAKDPR…YGFDSLPQKI (556 aa). A Glycyl lysine isopeptide (Lys-Gly) (interchain with G-Cter in SUMO) cross-link involves residue lysine 7. Serine 20 is subject to Phosphoserine. Polar residues predominate over residues 38 to 49; that stretch reads QGSQHSDASSVV. The LXXL motif 1 motif lies at 56–60; sequence LDRLL. A disordered region spans residues 67-111; that stretch reads AQELPDEKTQNQQSLSDVEGAFSGVEASRRRSRNPRAPEKDSRLL. Serine 82 is subject to Phosphoserine. Residues 115 to 119 carry the LXXL motif 2 motif; sequence LDTLL. A phosphoserine mark is found at serine 130 and serine 162. The tract at residues 152 to 239 is disordered; sequence RSVPATKGLL…EGSAGPLLKS (88 aa). The tract at residues 165–304 is mediates transcriptional transrepression (in isoform A); sequence MSRPESKAGD…LATTVVDFIH (140 aa). Positions 184-188 match the Nuclear localization signal motif; that stretch reads VLPKA. Residues serine 190 and serine 213 each carry the phosphoserine modification. A Phosphoserine; by MAPK1 modification is found at serine 293. The interval 333–371 is disordered; that stretch reads AAQVPFAPPRGSPSAPSPPVPCGDFPDCTYPPEGDPKED. The span at 338–353 shows a compositional bias: pro residues; it reads FAPPRGSPSAPSPPVP. Serine 344 carries the phosphoserine; by MAPK modification. Residue lysine 387 forms a Glycyl lysine isopeptide (Lys-Gly) (interchain with G-Cter in SUMO); alternate linkage. A Glycyl lysine isopeptide (Lys-Gly) (interchain with G-Cter in ubiquitin); alternate cross-link involves residue lysine 387. Serine 399 carries the phosphoserine; by CDK2 modification. The tract at residues 412–435 is disordered; that stretch reads TFPDFPLPPRPPRAPPSRPGEAAV. A compositionally biased stretch (pro residues) spans 416–429; that stretch reads FPLPPRPPRAPPSR. Residues 450 to 536 are AF1; mediates transcriptional activation; the sequence is SALECILYKA…VYPPYLNYLR (87 aa). Residue lysine 521 forms a Glycyl lysine isopeptide (Lys-Gly) (interchain with G-Cter in SUMO) linkage. 2 consecutive NR C4-type zinc fingers follow at residues 557 to 577 and 593 to 617; these read CLICGDEASGCHYGVLTCGSC and CAGRNDCIVDKIRRKNCPACRLRKC. A DNA-binding region (nuclear receptor) is located at residues 557–629; the sequence is CLICGDEASG…AGMVLGGRKF (73 aa). At serine 666 the chain carries Phosphoserine. Positions 669 to 903 constitute an NR LBD domain; the sequence is QEIQLVPPLI…EFPEMMSEVI (235 aa). An AF2; mediates transcriptional activation region spans residues 677–923; the sequence is LINLLMSIEP…MVKPLLFHKK (247 aa). Position 756 (arginine 756) interacts with progesterone.

It belongs to the nuclear hormone receptor family. NR3 subfamily. Interacts with SMARD1 and UNC45A. Interacts with CUEDC2; the interaction promotes ubiquitination, decreases sumoylation, and represses transcriptional activity. Interacts with PIAS3; the interaction promotes sumoylation of PR in a hormone-dependent manner, inhibits DNA-binding, and alters nuclear export. Interacts with SP1; the interaction requires ligand-induced phosphorylation on Ser-344. Interacts with PRMT2. Isoform A interacts with NCOR2. Isoform B (but not isoform A) interacts with NCOA2 and NCOA1. Isoform B (but not isoform A) interacts with KLF9. Interacts with GTF2B. In terms of processing, phosphorylated on multiple serine sites. Several of these sites are hormone-dependent. Phosphorylation on Ser-293 is highly hormone-dependent and modulates ubiquitination and sumoylation on Lys-387. Phosphorylation on Ser-344 also requires induction by hormone. Basal phosphorylation on Ser-82, Ser-190 and Ser-399 is increased in response to progesterone and can be phosphorylated in vitro by the CDK2-A1 complex. Increased levels of phosphorylation on Ser-399 also in the presence of EGF, heregulin, IGF, PMA and FBS. Phosphorylation at this site by CDK2 is ligand-independent, and increases nuclear translocation and transcriptional activity. Phosphorylation at Ser-293, but not at Ser-190, is impaired during the G(2)/M phase of the cell cycle. Phosphorylation on Ser-344 by ERK1/2 MAPK is required for interaction with SP1. Post-translationally, sumoylation is hormone-dependent and represses transcriptional activity. Sumoylation on all three sites is enhanced by PIAS3. Desumoylated by SENP1. Sumoylation on Lys-387, the main site of sumoylation, is repressed by ubiquitination on the same site, and modulated by phosphorylation at Ser-293. Ubiquitination is hormone-dependent and represses sumoylation on the same site. Promoted by MAPK-mediated phosphorylation on Ser-293. Ubiquitinated by UBR5, leading to its degradation: UBR5 specifically recognizes and binds ligand-bound PGR when it is not associated with coactivators (NCOAs). In presence of NCOAs, the UBR5-degron is not accessible, preventing its ubiquitination and degradation. In terms of processing, palmitoylated by ZDHHC7 and ZDHHC21. Palmitoylation is required for plasma membrane targeting and for rapid intracellular signaling via ERK and AKT kinases and cAMP generation. As to expression, isoform A and isoform B are expressed in the pituitary.

The protein resides in the nucleus. The protein localises to the cytoplasm. In terms of biological role, the steroid hormones and their receptors are involved in the regulation of eukaryotic gene expression and affect cellular proliferation and differentiation in target tissues. Depending on the isoform, progesterone receptor functions as a transcriptional activator or repressor. Its function is as follows. Ligand-dependent transdominant repressor of steroid hormone receptor transcriptional activity including repression of its isoform B, MR and ER. Transrepressional activity may involve recruitment of corepressor NCOR2. Transcriptional activator of several progesteron-dependent promoters in a variety of cell types. Involved in activation of SRC-dependent MAPK signaling on hormone stimulation. In Rattus norvegicus (Rat), this protein is Progesterone receptor (Pgr).